A 137-amino-acid chain; its full sequence is Nucleoside diphosphate kinase (137 aa).

ATP-binding residues include Lys-10, Phe-58, Arg-86, Thr-92, Arg-103, and Asn-113. His-116 (pros-phosphohistidine intermediate) is an active-site residue.

It belongs to the NDK family. As to quaternary structure, homotetramer. It depends on Mg(2+) as a cofactor.

It is found in the cytoplasm. The catalysed reaction is a 2'-deoxyribonucleoside 5'-diphosphate + ATP = a 2'-deoxyribonucleoside 5'-triphosphate + ADP. It carries out the reaction a ribonucleoside 5'-diphosphate + ATP = a ribonucleoside 5'-triphosphate + ADP. Its function is as follows. Major role in the synthesis of nucleoside triphosphates other than ATP. The ATP gamma phosphate is transferred to the NDP beta phosphate via a ping-pong mechanism, using a phosphorylated active-site intermediate. This Helicobacter pylori (strain P12) protein is Nucleoside diphosphate kinase.